The chain runs to 1461 residues: Potassium channel K2 (1461 aa).

The next 6 membrane-spanning stretches (helical) occupy residues 44–64 (IIEGLLCIITGVILKLSLIYI), 142–162 (FNYYFCNIRDMCYTIIWYISL), 183–203 (IYNMLLILLSTSYIDLVMVII), 218–238 (LIDIFFSAPCTYLFSKFIFVF), 242–262 (IDIYFMMGFLRNIKIFLNVSY), and 281–301 (IVLGVLLLCNAFASTIYTIQA). The pore-forming intramembrane region spans 322–340 (YFYFSIISISTVGYGDIFP). Residues 349–369 (CIIFIFWTFIWVPIQFNDLII) form a helical membrane-spanning segment. The disordered stretch occupies residues 771–794 (KRDDFDNNNNNNNNNIVKSRKKGR).

In terms of assembly, may form oligomers or interact with other proteins.

Its subcellular location is the membrane. In terms of biological role, contributes to transmembrane potassium transport. The chain is Potassium channel K2 from Plasmodium falciparum (isolate 3D7).